We begin with the raw amino-acid sequence, 258 residues long: Tryptophan synthase alpha chain (258 aa).

Residues Glu52 and Asp63 each act as proton acceptor in the active site.

This sequence belongs to the TrpA family. As to quaternary structure, tetramer of two alpha and two beta chains.

The enzyme catalyses (1S,2R)-1-C-(indol-3-yl)glycerol 3-phosphate + L-serine = D-glyceraldehyde 3-phosphate + L-tryptophan + H2O. It functions in the pathway amino-acid biosynthesis; L-tryptophan biosynthesis; L-tryptophan from chorismate: step 5/5. In terms of biological role, the alpha subunit is responsible for the aldol cleavage of indoleglycerol phosphate to indole and glyceraldehyde 3-phosphate. The sequence is that of Tryptophan synthase alpha chain from Streptococcus pneumoniae (strain Taiwan19F-14).